The sequence spans 470 residues: Trigger factor (470 aa).

In terms of domain architecture, PPIase FKBP-type spans 164–243 (GDYVVIDMTA…VTAVKVQELP (80 aa)). Composition is skewed to acidic residues over residues 424–438 (ETDA…ESVE) and 445–470 (AEDD…AAKA). The disordered stretch occupies residues 424–470 (ETDAEDAAEGVESVEVDLSAAAEDDAEETSDEPAAEDTATEDEAAKA).

The protein belongs to the FKBP-type PPIase family. Tig subfamily.

It is found in the cytoplasm. It carries out the reaction [protein]-peptidylproline (omega=180) = [protein]-peptidylproline (omega=0). Involved in protein export. Acts as a chaperone by maintaining the newly synthesized protein in an open conformation. Functions as a peptidyl-prolyl cis-trans isomerase. This chain is Trigger factor, found in Beutenbergia cavernae (strain ATCC BAA-8 / DSM 12333 / CCUG 43141 / JCM 11478 / NBRC 16432 / NCIMB 13614 / HKI 0122).